We begin with the raw amino-acid sequence, 313 residues long: MTQWYPASPALWQGRDDSIEAPDARRLFQTVTRSETFSPENWQQKIALMGFACDEGVKRNAGRPGAAGGPDALRKALANMASHQGHERLVDLGNWVAPTPDLEGAQQALRNAVSRCLRAGMRTLVLGGGHETAFGHGAGVLDAFAQESVGIINLDAHLDLRQTDRATSGTPFRQLAQLCDAQSRAFHYACFGVSRAANTQALWREAQWRNVTVVEDLDCHDALAQMTQFIDKVDKIYLTIDLDVLPVWEMPAVSAPAALGVPLIQVLRLIEPVCRSGKLQAADLVEFNPRFDEDGAAARVAARLGWQIAHWWR.

Mn(2+) is bound by residues His-130, Asp-155, His-157, Asp-159, Asp-241, and Asp-243.

Belongs to the arginase family. Requires Mn(2+) as cofactor.

The catalysed reaction is N-formimidoyl-L-glutamate + H2O = formamide + L-glutamate. Its pathway is amino-acid degradation; L-histidine degradation into L-glutamate; L-glutamate from N-formimidoyl-L-glutamate (hydrolase route): step 1/1. Functionally, catalyzes the conversion of N-formimidoyl-L-glutamate to L-glutamate and formamide. The protein is Formimidoylglutamase of Salmonella newport (strain SL254).